Here is a 290-residue protein sequence, read N- to C-terminus: MGKDDVIESGAGGGEFAAKDYTDPPPAPLIDAAELGSWSLYRAVIAEFIATLLFLYITVATVIGYKHQTDASASGADAACGGVGVLGIAWAFGGMIFVLVYCTAGISGGHINPAVTFGLFLARKVSLVRALLYIVAQCLGAICGVGLVKAFQSAYFDRYGGGANSLASGYSRGTGLGAEIIGTFVLVYTVFSATDPKRNARDSHVPVLAPLPIGFAVFMVHLATIPVTGTGINPARSLGAAVIYNKDKPWDDHWIFWVGPLVGAAIAAFYHQYILRAGAIKALGSFRSNA.

The segment at 1-20 (MGKDDVIESGAGGGEFAAKD) is disordered. Transmembrane regions (helical) follow at residues 43–63 (AVIA…ATVI) and 80–100 (CGGV…FVLV). The NPA 1 signature appears at 112 to 114 (NPA). Helical transmembrane passes span 131 to 151 (LLYI…VKAF), 173 to 193 (GTGL…VFSA), and 205 to 225 (VPVL…LATI). The NPA 2 motif lies at 233-235 (NPA). Residues 255–275 (IFWVGPLVGAAIAAFYHQYIL) form a helical membrane-spanning segment.

Belongs to the MIP/aquaporin (TC 1.A.8) family. PIP (TC 1.A.8.11) subfamily. Homomers. Can interact with PIP1-2 to form heteromers. As to expression, expressed in roots.

It localises to the cell membrane. Water channel required to facilitate the transport of water across cell membrane. Active as homomers. Increased activity when heteromerization with PIP1-2. The sequence is that of Aquaporin PIP2-1 (PIP2-1) from Zea mays (Maize).